The sequence spans 563 residues: MDDFAQEWPNLPRSDNGLQMDQLVGDLPTDGGFEPQTRARSNTWPCPRPEPVDELDSTKASNQQLANGDPQQAMQNANAAKKNSSRRNAWGNLSYADLITHAIGSATDKRLTLSQIYEWMVQNVSYFKDKGDSNSSAGWKNSIRHNLSLHNRFMRVQNEGTGKSSWWMLNPEAKPGKSVRRRAASMETSRYEKRRGRAKKRVEALRQAGVVGLNDATPSPSSSVSEGLDHFPESPLHSGSYQLSPDFRQRASSNASSCGRLSPIRALDLEPDWGFPVDYPNTTLTQAQVQVFDQLAGSMADELKLHTDMLQQQGFSAASGLPTQPPPPYQPPQHPQHTQGYALNGPGLSPNSVTTTMSPAYPNSEPSSDSLNTYSNVLLEAAADNAALLVQQQQQQQQQQQHASTLIGQCLEALNSEPIEEFNLENFQGGLECNVEELLHQELCYDGMLDINIPLAAVNTNATNVILTNNSTNSSSSNSNNSVAGNSSANLQLSQLQAQLQLQQQQQQQQQQQQQQQQQQQQLLLSNNNNNNNNSLDTASANLNARVQYTQPSVVTSPPSWVH.

Disordered stretches follow at residues 1 to 72 (MDDF…DPQQ) and 177 to 243 (KSVR…SYQL). Threonine 43 carries the phosphothreonine; by PKB/AKT1 modification. The segment covering 58–72 (TKASNQQLANGDPQQ) has biased composition (polar residues). Positions 90–196 (WGNLSYADLI…ETSRYEKRRG (107 aa)) form a DNA-binding region, fork-head. A Phosphoserine; by PKB/AKT1 modification is found at serine 185. Positions 216–225 (ATPSPSSSVS) are enriched in polar residues. Serine 253 carries the phosphoserine; by PKB/AKT1 modification. 3 positions are modified to phosphoserine: serine 256, serine 257, and serine 262. Residues 317 to 371 (AASGLPTQPPPPYQPPQHPQHTQGYALNGPGLSPNSVTTTMSPAYPNSEPSSDSL) form a disordered region. A compositionally biased stretch (pro residues) spans 323–334 (TQPPPPYQPPQH). Residues 349-358 (SPNSVTTTMS) are compositionally biased toward polar residues.

As to quaternary structure, interacts with melt.

It is found in the cytoplasm. The protein localises to the nucleus. Functionally, transcription factor involved in the regulation of the insulin signaling pathway. Consistently activates both the downstream target Thor\d4EBP and the feedback control target InR. Involved in negative regulation of the cell cycle, modulating cell growth and proliferation. In response to cellular stresses, such as nutrient deprivation or increased levels of reactive oxygen species, foxo is activated and inhibits growth through the action of target genes such as Thor. Foxo activated in the adult fat body can regulate lifespan in adults; an insulin peptide itself may function as one secondary messenger of insulin-regulated aging. Also regulates Lip4, homolog of human acid lipases, thereby acting as a key modulator of lipid metabolism by insulin signaling and integrates insulin responses to glucose and lipid homeostasis. The chain is Forkhead box protein O from Drosophila mojavensis (Fruit fly).